The chain runs to 687 residues: Adhesion G-protein coupled receptor G1 (687 aa).

Residues 1-25 form the signal peptide; that stretch reads MTAQSLLQTTLFLLSLLFLVQGAHG. 26-33 is a heparin binding site; it reads RGHREDFR. Residues 26 to 402 lie on the Extracellular side of the membrane; sequence RGHREDFRFC…VEVDAVHKHY (377 aa). Cystine bridges form between C35-C91 and C121-C177. N-linked (GlcNAc...) asparagine glycosylation is found at N39, N148, and N171. Residue 190–200 coordinates heparin; the sequence is LKHPQKASRRP. In terms of domain architecture, GAIN-B spans 224-395; sequence DTVSFEEDRI…AVLMVSSVEV (172 aa). Residues N234, N303, N324, and N341 are each glycosylated (N-linked (GlcNAc...) asparagine). Cystine bridges form between C346/C377 and C366/C379. The tract at residues 346–395 is GPS; sequence CVFWVEDPTLSSPGHWSSAGCETVRRETQTSCLCNHLTYFAVLMVSSVEV. The stachel stretch occupies residues 384–397; sequence YFAVLMVSSVEVDA. Residues 403 to 423 traverse the membrane as a helical segment; it reads LSLLSYVGCVVSALACVVTIA. Topologically, residues 424-442 are cytoplasmic; that stretch reads AYLCSRRKPRDYTIKVHMN. Residues 443–463 traverse the membrane as a helical segment; the sequence is LLLAVFLLDTSFLLSEPVALT. Topologically, residues 464–470 are extracellular; the sequence is GSEAGCR. The helical transmembrane segment at 471 to 491 threads the bilayer; that stretch reads ASAIFLHFSLLACLSWMGLEG. Topologically, residues 492-512 are cytoplasmic; that stretch reads YNLYRLVVEVFGTYVPGYLLK. Residues 513–533 traverse the membrane as a helical segment; that stretch reads LSAMGWGFPIFLVTLVALVDV. Residues 534–570 are Extracellular-facing; the sequence is DNYGPIILAVHRTPEGVIYPSMCWIRDSLVSYITNLG. Residues 571-591 form a helical membrane-spanning segment; the sequence is LFSLVFLFNMAMLATMVVQIL. Residues 592–603 lie on the Cytoplasmic side of the membrane; the sequence is RLRPHTQKWSHV. The chain crosses the membrane as a helical span at residues 604-624; that stretch reads LTLLGLSLVLGLPWALIFFSF. Over 625 to 630 the chain is Extracellular; sequence ASGTFQ. Residues 631-651 form a helical membrane-spanning segment; the sequence is LVILYLFSIITSFQGFLIFIW. Residues 652–687 lie on the Cytoplasmic side of the membrane; the sequence is YWSMRLQARGGPSPLKSNSDSARLPISSGSTSSSRI. The disordered stretch occupies residues 664–687; the sequence is SPLKSNSDSARLPISSGSTSSSRI. Low complexity predominate over residues 678–687; that stretch reads SSGSTSSSRI.

This sequence belongs to the G-protein coupled receptor 2 family. LN-TM7 subfamily. Heterodimer of 2 chains generated by proteolytic processing; the large extracellular N-terminal fragment (ADGRG1 NT) and the membrane-bound C-terminal fragment (ADGRG1-CT) predominantly remain associated and non-covalently linked. ADGRG1 NT self-associates in a trans-trans manner; the homophilic interaction enhances receptor signaling. Interacts with TGM2. Interacts with heparin; leading to the reduction of ADGRG1 shedding. Interacts with COL3A1. Part of a GPCR-tetraspanin complex at least consisting of ADGRG1, CD81, eventually CD9, and GNA11 in which CD81 is enhancing the association of ADGRG1 with GNA11. In terms of processing, autoproteolytically cleaved into 2 fragments; the large extracellular N-terminal fragment (ADGRG1 NT) and the membrane-bound C-terminal fragment (ADGRG1 CT) predominantly remain associated and non-covalently linked. Shedding to yield the secreted ADGRG1 N-terminal fragment seems to involve metalloprotease(s). Post-translationally, ubiquitinated. Undergoes polyubiquitination upon activation.

The protein localises to the cell membrane. It is found in the secreted. Its subcellular location is the membrane raft. With respect to regulation, forms a heterodimer of 2 chains generated by proteolytic processing that remain associated through non-covalent interactions mediated by the GAIN-B domain. In the inactivated receptor, the Stachel sequence (also named stalk) is embedded in the GAIN-B domain, where it adopts a beta-strand conformation. On activation, the Stachel moves into the 7 transmembrane region and adopts a twisted hook-shaped configuration that forms contacts within the receptor, leading to coupling of a G-alpha protein, which activates signaling. The cleaved GAIN-B and N-terminal domains can then dissociate from the rest of the receptor. In terms of biological role, adhesion G-protein coupled receptor (aGPCR) for steroid hormone 17alpha-hydroxypregnenolone (17-OH), which is involved in cell adhesion and cell-cell interactions. Ligand binding causes a conformation change that triggers signaling via guanine nucleotide-binding proteins (G proteins) and modulates the activity of downstream effectors, such as RhoA pathway. ADGRG1 is coupled to G(12) and/or G(13) G proteins (GNA12 and GNA13, respectively) and mediates the activation Rho small GTPases. Acts as a potent suppressor of ferroptosis: binding to 17-OH-binding initiates signaling that down-regulates CD36 and alleviates ferroptosis-induced liver injury. Ligand-binding also induces cell adhesion activity via association with proteins such as collagen III/COL3A1 and TGM2. Mediates cell matrix adhesion in developing neurons and hematopoietic stem cells. Involved in cortical development, specifically in maintenance of the pial basement membrane integrity and in cortical lamination: association with COL3A1 in the developing brain inhibits neuronal migration via activation of the RhoA pathway. Together with TGM2, acts as a regulator of myelination and myelin repair in oligodendrocyte precursor cells. Acts as a hemostatic sensor of shear force: G protein-coupled receptor signaling is activated in response to shear force in platelets, promoting G(13) G protein signaling, and platelet shape change and aggregation in a COL3A1-dependent manner. Acts as an inhibitor of VEGFA production thereby inhibiting angiogenesis through a signaling pathway mediated by PRKCA. Plays a role in the maintenance of hematopoietic stem cells in bone marrow niche. Plays an essential role in testis development. The polypeptide is Adhesion G-protein coupled receptor G1 (ADGRG1) (Pan troglodytes (Chimpanzee)).